A 182-amino-acid polypeptide reads, in one-letter code: Ribosome-recycling factor (182 aa).

Residues 136–160 (VKKSEKDGDLSEDQSRDEQEKIQKE) form a disordered region.

This sequence belongs to the RRF family.

The protein resides in the cytoplasm. Functionally, responsible for the release of ribosomes from messenger RNA at the termination of protein biosynthesis. May increase the efficiency of translation by recycling ribosomes from one round of translation to another. The chain is Ribosome-recycling factor from Prochlorococcus marinus (strain NATL1A).